Here is a 149-residue protein sequence, read N- to C-terminus: Urease accessory protein UreE (149 aa).

It belongs to the UreE family.

It localises to the cytoplasm. Functionally, involved in urease metallocenter assembly. Binds nickel. Probably functions as a nickel donor during metallocenter assembly. The polypeptide is Urease accessory protein UreE (Prochlorococcus marinus (strain MIT 9301)).